Here is a 197-residue protein sequence, read N- to C-terminus: NADH-quinone oxidoreductase subunit I 2 (197 aa).

2 consecutive 4Fe-4S ferredoxin-type domains span residues 42–71 and 91–120; these read GVIGLFEENCTVCMLCARECPDWCIYIDSH and DRFAIDFALCMYCGICIEVCPFDALFWSPE. C51, C54, C57, C61, C100, C103, C106, and C110 together coordinate [4Fe-4S] cluster. Residues 147–197 form a disordered region; sequence APPALDPGAEEPKELAAARKAADKLAAQQQPDQPGPDHPGQPDESGQEGRT. Basic and acidic residues predominate over residues 156-169; the sequence is EEPKELAAARKAAD.

The protein belongs to the complex I 23 kDa subunit family. NDH-1 is composed of 14 different subunits. Subunits NuoA, H, J, K, L, M, N constitute the membrane sector of the complex. Requires [4Fe-4S] cluster as cofactor.

Its subcellular location is the cell membrane. The catalysed reaction is a quinone + NADH + 5 H(+)(in) = a quinol + NAD(+) + 4 H(+)(out). Functionally, NDH-1 shuttles electrons from NADH, via FMN and iron-sulfur (Fe-S) centers, to quinones in the respiratory chain. The immediate electron acceptor for the enzyme in this species is believed to be ubiquinone. Couples the redox reaction to proton translocation (for every two electrons transferred, four hydrogen ions are translocated across the cytoplasmic membrane), and thus conserves the redox energy in a proton gradient. This Streptomyces coelicolor (strain ATCC BAA-471 / A3(2) / M145) protein is NADH-quinone oxidoreductase subunit I 2.